We begin with the raw amino-acid sequence, 68 residues long: Adipokinetic prohormone type 1 (68 aa).

Residues 1-20 (MNKIYFVIVFVACFCLFAEA) form the signal peptide. Glutamine 21 is subject to Pyrrolidone carboxylic acid. Glycine 30 carries the glycine amide modification. A propeptide spanning residues 34 to 68 (SGVAPMSCKNEEAVATIFKLIQNEAERFIICQQKS) is cleaved from the precursor.

Expressed in antennal lobe (AL), corpora cardiaca (CC), corpora allata (CA) and gnathal ganglion (GNG) (at protein level). Expression in CC and CA detected in all animals, expression in GNG in some animals and in AL in few animals (at protein level).

The protein resides in the secreted. In terms of biological role, this hormone, released from cells in the corpora cardiaca, causes release of diglycerides from the fat body and stimulation of muscles to use these diglycerides as an energy source during energy-demanding processes. In Agrotis ipsilon (Black cutworm moth), this protein is Adipokinetic prohormone type 1.